The sequence spans 317 residues: Acetyl-coenzyme A carboxylase carboxyl transferase subunit alpha (317 aa).

The CoA carboxyltransferase C-terminal domain occupies 33 to 294 (NLDDEIARLQ…KQRLLDDLKE (262 aa)).

This sequence belongs to the AccA family. Acetyl-CoA carboxylase is a heterohexamer composed of biotin carboxyl carrier protein (AccB), biotin carboxylase (AccC) and two subunits each of ACCase subunit alpha (AccA) and ACCase subunit beta (AccD).

It is found in the cytoplasm. The catalysed reaction is N(6)-carboxybiotinyl-L-lysyl-[protein] + acetyl-CoA = N(6)-biotinyl-L-lysyl-[protein] + malonyl-CoA. It functions in the pathway lipid metabolism; malonyl-CoA biosynthesis; malonyl-CoA from acetyl-CoA: step 1/1. Functionally, component of the acetyl coenzyme A carboxylase (ACC) complex. First, biotin carboxylase catalyzes the carboxylation of biotin on its carrier protein (BCCP) and then the CO(2) group is transferred by the carboxyltransferase to acetyl-CoA to form malonyl-CoA. This is Acetyl-coenzyme A carboxylase carboxyl transferase subunit alpha from Pasteurella multocida (strain Pm70).